Consider the following 454-residue polypeptide: Bifunctional protein GlmU (454 aa).

Positions 1-226 (MALNVVILAA…AVEVEGANNR (226 aa)) are pyrophosphorylase. UDP-N-acetyl-alpha-D-glucosamine contacts are provided by residues 8–11 (LAAG), lysine 22, glutamine 73, 78–79 (GT), 100–102 (YGD), glycine 137, glutamate 151, asparagine 166, and asparagine 224. Residue aspartate 102 coordinates Mg(2+). A Mg(2+)-binding site is contributed by asparagine 224. The linker stretch occupies residues 227–247 (VQLAQLERAYQARAAEKLMLE). The N-acetyltransferase stretch occupies residues 248–454 (GANLRDPARI…GWARPVKKAK (207 aa)). Arginine 330 and lysine 348 together coordinate UDP-N-acetyl-alpha-D-glucosamine. Histidine 360 functions as the Proton acceptor in the catalytic mechanism. Tyrosine 363 and asparagine 374 together coordinate UDP-N-acetyl-alpha-D-glucosamine. Residues alanine 377, 383–384 (NY), serine 402, alanine 420, and arginine 437 contribute to the acetyl-CoA site.

It in the N-terminal section; belongs to the N-acetylglucosamine-1-phosphate uridyltransferase family. In the C-terminal section; belongs to the transferase hexapeptide repeat family. In terms of assembly, homotrimer. Requires Mg(2+) as cofactor.

The protein localises to the cytoplasm. It carries out the reaction alpha-D-glucosamine 1-phosphate + acetyl-CoA = N-acetyl-alpha-D-glucosamine 1-phosphate + CoA + H(+). The catalysed reaction is N-acetyl-alpha-D-glucosamine 1-phosphate + UTP + H(+) = UDP-N-acetyl-alpha-D-glucosamine + diphosphate. Its pathway is nucleotide-sugar biosynthesis; UDP-N-acetyl-alpha-D-glucosamine biosynthesis; N-acetyl-alpha-D-glucosamine 1-phosphate from alpha-D-glucosamine 6-phosphate (route II): step 2/2. The protein operates within nucleotide-sugar biosynthesis; UDP-N-acetyl-alpha-D-glucosamine biosynthesis; UDP-N-acetyl-alpha-D-glucosamine from N-acetyl-alpha-D-glucosamine 1-phosphate: step 1/1. It functions in the pathway bacterial outer membrane biogenesis; LPS lipid A biosynthesis. In terms of biological role, catalyzes the last two sequential reactions in the de novo biosynthetic pathway for UDP-N-acetylglucosamine (UDP-GlcNAc). The C-terminal domain catalyzes the transfer of acetyl group from acetyl coenzyme A to glucosamine-1-phosphate (GlcN-1-P) to produce N-acetylglucosamine-1-phosphate (GlcNAc-1-P), which is converted into UDP-GlcNAc by the transfer of uridine 5-monophosphate (from uridine 5-triphosphate), a reaction catalyzed by the N-terminal domain. This Shewanella piezotolerans (strain WP3 / JCM 13877) protein is Bifunctional protein GlmU.